The sequence spans 193 residues: Interferon epsilon (193 aa).

An N-terminal signal peptide occupies residues 1 to 21; the sequence is MINKSFFEIMLVLLASSTGFS. C53 and C163 are joined by a disulfide. An N-linked (GlcNAc...) asparagine glycan is attached at N139.

It belongs to the alpha/beta interferon family.

It is found in the secreted. In terms of biological role, type I interferon required for maintaining basal levels of IFN-regulated genes, including 2'-5'-oligoadenylate synthetase, IRF7 and ISG15, in the female reproductive tract. Directly mediates protection against viral and bacterial genital infections. This is Interferon epsilon (IFNE) from Sus scrofa (Pig).